The chain runs to 448 residues: C4-dicarboxylate transport protein (448 aa).

The next 9 membrane-spanning stretches (helical) occupy residues 9–29 (SLYF…HFYP), 59–79 (LIKM…IAGM), 91–111 (VALL…LLVI), 159–179 (AFAN…GFAL), 203–223 (IVNM…AFTI), 237–257 (LIIC…GTIS), 312–332 (GYSF…IFIA), 345–365 (ITLL…TGSG), and 367–387 (IVMA…LALI).

Belongs to the dicarboxylate/amino acid:cation symporter (DAACS) (TC 2.A.23) family.

It localises to the cell inner membrane. Functionally, responsible for the transport of dicarboxylates such as succinate, fumarate, and malate from the periplasm across the membrane. The sequence is that of C4-dicarboxylate transport protein from Acinetobacter baylyi (strain ATCC 33305 / BD413 / ADP1).